Here is a 901-residue protein sequence, read N- to C-terminus: Protein translocase subunit SecA 1 (901 aa).

Residues glutamine 87, 105-109 (GEGKT), and aspartate 500 each bind ATP. Residues 847-901 (LNHPESGSWGGEGEGPSSEGAPHLPFKRDGEKVGRNQACPCGSGKKYKQCCGKLS) form a disordered region. 4 residues coordinate Zn(2+): cysteine 885, cysteine 887, cysteine 896, and cysteine 897.

It belongs to the SecA family. In terms of assembly, monomer and homodimer. Part of the essential Sec protein translocation apparatus which comprises SecA, SecYEG and auxiliary proteins SecDF-YajC and YidC. Requires Zn(2+) as cofactor.

The protein localises to the cell inner membrane. It localises to the cytoplasm. The catalysed reaction is ATP + H2O + cellular proteinSide 1 = ADP + phosphate + cellular proteinSide 2.. Its function is as follows. Part of the Sec protein translocase complex. Interacts with the SecYEG preprotein conducting channel. Has a central role in coupling the hydrolysis of ATP to the transfer of proteins into and across the cell membrane, serving both as a receptor for the preprotein-SecB complex and as an ATP-driven molecular motor driving the stepwise translocation of polypeptide chains across the membrane. The protein is Protein translocase subunit SecA 1 of Magnetococcus marinus (strain ATCC BAA-1437 / JCM 17883 / MC-1).